The following is a 262-amino-acid chain: Acyl-[acyl-carrier-protein]--UDP-N-acetylglucosamine O-acyltransferase (262 aa).

This sequence belongs to the transferase hexapeptide repeat family. LpxA subfamily. Homotrimer.

It localises to the cytoplasm. It catalyses the reaction a (3R)-hydroxyacyl-[ACP] + UDP-N-acetyl-alpha-D-glucosamine = a UDP-3-O-[(3R)-3-hydroxyacyl]-N-acetyl-alpha-D-glucosamine + holo-[ACP]. It functions in the pathway glycolipid biosynthesis; lipid IV(A) biosynthesis; lipid IV(A) from (3R)-3-hydroxytetradecanoyl-[acyl-carrier-protein] and UDP-N-acetyl-alpha-D-glucosamine: step 1/6. In terms of biological role, involved in the biosynthesis of lipid A, a phosphorylated glycolipid that anchors the lipopolysaccharide to the outer membrane of the cell. The polypeptide is Acyl-[acyl-carrier-protein]--UDP-N-acetylglucosamine O-acyltransferase (Burkholderia vietnamiensis (strain G4 / LMG 22486) (Burkholderia cepacia (strain R1808))).